A 390-amino-acid polypeptide reads, in one-letter code: 1-deoxy-D-xylulose 5-phosphate reductoisomerase (390 aa).

NADPH is bound by residues threonine 10, glycine 11, serine 12, isoleucine 13, glycine 36, arginine 37, asparagine 38, and asparagine 121. Lysine 122 is a binding site for 1-deoxy-D-xylulose 5-phosphate. Residue glutamate 123 coordinates NADPH. Aspartate 147 provides a ligand contact to Mn(2+). 1-deoxy-D-xylulose 5-phosphate contacts are provided by serine 148, glutamate 149, serine 173, and histidine 196. Position 149 (glutamate 149) interacts with Mn(2+). NADPH is bound at residue glycine 202. The 1-deoxy-D-xylulose 5-phosphate site is built by serine 209, asparagine 214, lysine 215, and glutamate 218. Glutamate 218 is a binding site for Mn(2+). The interval 367–390 (AASEHGRREAEKRVGARAHAPASR) is disordered. The segment covering 370 to 380 (EHGRREAEKRV) has biased composition (basic and acidic residues).

The protein belongs to the DXR family. Mg(2+) serves as cofactor. It depends on Mn(2+) as a cofactor.

The catalysed reaction is 2-C-methyl-D-erythritol 4-phosphate + NADP(+) = 1-deoxy-D-xylulose 5-phosphate + NADPH + H(+). It functions in the pathway isoprenoid biosynthesis; isopentenyl diphosphate biosynthesis via DXP pathway; isopentenyl diphosphate from 1-deoxy-D-xylulose 5-phosphate: step 1/6. Functionally, catalyzes the NADPH-dependent rearrangement and reduction of 1-deoxy-D-xylulose-5-phosphate (DXP) to 2-C-methyl-D-erythritol 4-phosphate (MEP). In Anaeromyxobacter dehalogenans (strain 2CP-1 / ATCC BAA-258), this protein is 1-deoxy-D-xylulose 5-phosphate reductoisomerase.